Reading from the N-terminus, the 151-residue chain is FAD synthase (151 aa).

ATP contacts are provided by residues 9–10 (TF), 14–17 (HPGH), D96, and Y123.

This sequence belongs to the archaeal FAD synthase family. Homodimer. It depends on a divalent metal cation as a cofactor.

It catalyses the reaction FMN + ATP + H(+) = FAD + diphosphate. Its pathway is cofactor biosynthesis; FAD biosynthesis; FAD from FMN: step 1/1. Catalyzes the transfer of the AMP portion of ATP to flavin mononucleotide (FMN) to produce flavin adenine dinucleotide (FAD) coenzyme. The polypeptide is FAD synthase (Methanothermobacter thermautotrophicus (strain ATCC 29096 / DSM 1053 / JCM 10044 / NBRC 100330 / Delta H) (Methanobacterium thermoautotrophicum)).